Reading from the N-terminus, the 442-residue chain is Kelch domain-containing protein 10 (442 aa).

A disordered region spans residues 1–57; that stretch reads MSAAQGWDRNRRRGGGAAGAGGGGSGAGGGSGGSGGRGTGQLNRFVQLSGRPHLPGK. Arginine 13 carries the post-translational modification Omega-N-methylarginine. A compositionally biased stretch (gly residues) spans 15-39; the sequence is GGAAGAGGGGSGAGGGSGGSGGRGT. 6 Kelch repeats span residues 87–154, 155–198, 199–260, 261–319, 320–364, and 365–403; these read RPPP…PREL, ASMS…ALLS, CRGK…PEER, YRHE…RRCH, SCVQ…PEPV, and YFHC…LVVP. Positions 401–442 are interaction with CUL2; sequence VVPSLLELAWEKLLAAFPNLANLSRTQLLHLGLTQGLIERLK.

It belongs to the KLHDC10 family. As to quaternary structure, component of a CRL2 E3 ubiquitin-protein ligase complex, also named ECS (Elongin BC-CUL2/5-SOCS-box protein) complex, composed of CUL2, Elongin BC (ELOB and ELOC), RBX1 and substrate-specific adapter KLHDC10. Interacts (via the 6 Kelch repeats) with PPP5C.

The protein resides in the nucleus. The protein localises to the cytoplasm. It functions in the pathway protein modification; protein ubiquitination. Substrate-recognition component of a Cul2-RING (CRL2) E3 ubiquitin-protein ligase complex of the DesCEND (destruction via C-end degrons) pathway, which recognizes a C-degron located at the extreme C-terminus of target proteins, leading to their ubiquitination and degradation. The C-degron recognized by the DesCEND pathway is usually a motif of less than ten residues and can be present in full-length proteins, truncated proteins or proteolytically cleaved forms. The CRL2(KLHDC10) complex specifically recognizes proteins with a proline-glycine (Pro-Gly) or an alanine tail (CAT tail) at the C-terminus, leading to their ubiquitination and degradation. The CRL2(KLHDC10) complex is involved in the ribosome-associated quality control (RQC) pathway, which mediates the extraction of incompletely synthesized nascent chains from stalled ribosomes: CRL2(KLHDC10) acts downstream of NEMF and recognizes CAT tails associated with stalled nascent chains, leading to their ubiquitination and degradation. Participates in the oxidative stress-induced cell death through MAP3K5 activation. Inhibits PPP5C phosphatase activity on MAP3K5. Acts as a regulator of necroptosis. The sequence is that of Kelch domain-containing protein 10 from Homo sapiens (Human).